A 218-amino-acid polypeptide reads, in one-letter code: Insulin-induced gene 2 protein (218 aa).

Topologically, residues 1-21 (MGDRENVSYGSRPILAQKMNL) are cytoplasmic. Residues 22–44 (LLRGFLLFLIGVFLALVLNLLQV) form a helical membrane-spanning segment. The Lumenal segment spans residues 45–63 (QRNVTLFPPDVLSSLFSSA). A helical membrane pass occupies residues 64 to 81 (WWVPLCCGTAAAAIGLLY). Residues 82 to 96 (PCIDRHLGEPHKFKR) lie on the Cytoplasmic side of the membrane. The chain crosses the membrane as a helical span at residues 97-119 (EWSSVMRCVAVFVGINHASAKVD). Over 120–122 (FAN) the chain is Lumenal. The helical transmembrane segment at 123 to 141 (NMQLSLTLAALSIGLWWTF) threads the bilayer. Residues 142–146 (DRSRS) are Cytoplasmic-facing. The chain crosses the membrane as a helical span at residues 147–168 (GLGLGIGISFFATLVSQLLVYN). Residues 169 to 182 (GVYEYTAPDFLYVR) lie on the Lumenal side of the membrane. The helical transmembrane segment at 183–200 (SWLPCIFFAGGITMGNIG) threads the bilayer. Residues 201-218 (RQLEMYERKALVEKSHRD) lie on the Cytoplasmic side of the membrane. Positions 212–218 (VEKSHRD) match the KxHxx motif.

This sequence belongs to the INSIG family. As to quaternary structure, interacts with scap; interaction is direct and only takes place in the presence of sterols; it prevents interaction between scap and the coat protein complex II (COPII). Associates with the SCAP-SREBP complex; association is mediated via its interaction with scap and only takes place in the presence of sterols.

It localises to the endoplasmic reticulum membrane. In terms of biological role, oxysterol-binding protein that mediates feedback control of cholesterol synthesis by controlling both endoplasmic reticulum to Golgi transport of scap and degradation of hmgcr. Acts as a negative regulator of cholesterol biosynthesis by mediating the retention of the SCAP-SREBP complex in the endoplasmic reticulum, thereby blocking the processing of sterol regulatory element-binding proteins (SREBPs). Binds oxysterol, including 22-hydroxycholesterol, 24-hydroxycholesterol, 25-hydroxycholesterol and 27-hydroxycholesterol, regulating interaction with scap and retention of the SCAP-SREBP complex in the endoplasmic reticulum. In presence of oxysterol, interacts with scap, retaining the SCAP-SREBP complex in the endoplasmic reticulum, thereby preventing scap from escorting SREBPs to the Golgi. Sterol deprivation reduce oxysterol-binding, disrupting the interaction between insig2 and scap, thereby promoting Golgi transport of the SCAP-SREBP complex, followed by processing and nuclear translocation of SREBPs. Also regulates cholesterol synthesis by regulating degradation of hmgcr. This Xenopus laevis (African clawed frog) protein is Insulin-induced gene 2 protein.